Reading from the N-terminus, the 322-residue chain is Ribosomal RNA small subunit methyltransferase H (322 aa).

S-adenosyl-L-methionine-binding positions include 40 to 42 (GGH), D60, F84, D106, and Q113.

It belongs to the methyltransferase superfamily. RsmH family.

The protein localises to the cytoplasm. The enzyme catalyses cytidine(1402) in 16S rRNA + S-adenosyl-L-methionine = N(4)-methylcytidine(1402) in 16S rRNA + S-adenosyl-L-homocysteine + H(+). Functionally, specifically methylates the N4 position of cytidine in position 1402 (C1402) of 16S rRNA. This Aggregatibacter aphrophilus (strain NJ8700) (Haemophilus aphrophilus) protein is Ribosomal RNA small subunit methyltransferase H.